Reading from the N-terminus, the 336-residue chain is Phosphate acyltransferase (336 aa).

Belongs to the PlsX family. As to quaternary structure, homodimer. Probably interacts with PlsY.

The protein localises to the cytoplasm. It carries out the reaction a fatty acyl-[ACP] + phosphate = an acyl phosphate + holo-[ACP]. Its pathway is lipid metabolism; phospholipid metabolism. In terms of biological role, catalyzes the reversible formation of acyl-phosphate (acyl-PO(4)) from acyl-[acyl-carrier-protein] (acyl-ACP). This enzyme utilizes acyl-ACP as fatty acyl donor, but not acyl-CoA. The protein is Phosphate acyltransferase of Pseudomonas paraeruginosa (strain DSM 24068 / PA7) (Pseudomonas aeruginosa (strain PA7)).